Here is a 226-residue protein sequence, read N- to C-terminus: ATP synthase F(0) complex subunit a (226 aa).

Transmembrane regions (helical) follow at residues 12–32, 68–88, 97–117, 138–158, 164–184, and 189–209; these read PTMM…ILFP, WTLM…LGLL, QLSM…VTGF, IPML…ALAV, ITAG…LMSI, and ASIT…VALI.

This sequence belongs to the ATPase A chain family. In terms of assembly, component of the ATP synthase complex composed at least of ATP5F1A/subunit alpha, ATP5F1B/subunit beta, ATP5MC1/subunit c (homooctomer), MT-ATP6/subunit a, MT-ATP8/subunit 8, ATP5ME/subunit e, ATP5MF/subunit f, ATP5MG/subunit g, ATP5MK/subunit k, ATP5MJ/subunit j, ATP5F1C/subunit gamma, ATP5F1D/subunit delta, ATP5F1E/subunit epsilon, ATP5PF/subunit F6, ATP5PB/subunit b, ATP5PD/subunit d, ATP5PO/subunit OSCP. ATP synthase complex consists of a soluble F(1) head domain (subunits alpha(3) and beta(3)) - the catalytic core - and a membrane F(0) domain - the membrane proton channel (subunits c, a, 8, e, f, g, k and j). These two domains are linked by a central stalk (subunits gamma, delta, and epsilon) rotating inside the F1 region and a stationary peripheral stalk (subunits F6, b, d, and OSCP). Interacts with DNAJC30; interaction is direct.

The protein localises to the mitochondrion inner membrane. The enzyme catalyses H(+)(in) = H(+)(out). Functionally, subunit a, of the mitochondrial membrane ATP synthase complex (F(1)F(0) ATP synthase or Complex V) that produces ATP from ADP in the presence of a proton gradient across the membrane which is generated by electron transport complexes of the respiratory chain. ATP synthase complex consist of a soluble F(1) head domain - the catalytic core - and a membrane F(1) domain - the membrane proton channel. These two domains are linked by a central stalk rotating inside the F(1) region and a stationary peripheral stalk. During catalysis, ATP synthesis in the catalytic domain of F(1) is coupled via a rotary mechanism of the central stalk subunits to proton translocation. With the subunit c (ATP5MC1), forms the proton-conducting channel in the F(0) domain, that contains two crucial half-channels (inlet and outlet) that facilitate proton movement from the mitochondrial intermembrane space (IMS) into the matrix. Protons are taken up via the inlet half-channel and released through the outlet half-channel, following a Grotthuss mechanism. The chain is ATP synthase F(0) complex subunit a from Dasypus novemcinctus (Nine-banded armadillo).